A 455-amino-acid chain; its full sequence is Adenylyltransferase and sulfurtransferase UBA4 (455 aa).

ATP is bound by residues G93, D114, 121–125 (SNLHR), K138, and 182–183 (DH). C224 and C227 together coordinate Zn(2+). C241 serves as the catalytic Glycyl thioester intermediate; for adenylyltransferase activity. Residues C302 and C305 each contribute to the Zn(2+) site. The region spanning 355-453 (QSREHTLIDV…WSEDIDAAFP (99 aa)) is the Rhodanese domain. The active-site Cysteine persulfide intermediate; for sulfurtransferase activity is the C413.

The protein in the N-terminal section; belongs to the HesA/MoeB/ThiF family. UBA4 subfamily. Zn(2+) is required as a cofactor.

It localises to the cytoplasm. The protein resides in the cytosol. Its pathway is tRNA modification; 5-methoxycarbonylmethyl-2-thiouridine-tRNA biosynthesis. Plays a central role in 2-thiolation of mcm(5)S(2)U at tRNA wobble positions of cytosolic tRNA(Lys), tRNA(Glu) and tRNA(Gln). Acts by mediating the C-terminal thiocarboxylation of sulfur carrier URM1. Its N-terminus first activates URM1 as acyl-adenylate (-COAMP), then the persulfide sulfur on the catalytic cysteine is transferred to URM1 to form thiocarboxylation (-COSH) of its C-terminus. The reaction probably involves hydrogen sulfide that is generated from the persulfide intermediate and that acts as a nucleophile towards URM1. Subsequently, a transient disulfide bond is formed. Does not use thiosulfate as sulfur donor; NFS1 probably acting as a sulfur donor for thiocarboxylation reactions. Prior mcm(5) tRNA modification by the elongator complex is required for 2-thiolation. May also be involved in protein urmylation. The chain is Adenylyltransferase and sulfurtransferase UBA4 from Lodderomyces elongisporus (strain ATCC 11503 / CBS 2605 / JCM 1781 / NBRC 1676 / NRRL YB-4239) (Yeast).